Here is a 502-residue protein sequence, read N- to C-terminus: Glycerol kinase (502 aa).

Residue Thr14 participates in ADP binding. ATP-binding residues include Thr14, Thr15, and Ser16. Thr14 provides a ligand contact to sn-glycerol 3-phosphate. Arg18 serves as a coordination point for ADP. Residues Arg84, Glu85, Tyr136, and Asp246 each contribute to the sn-glycerol 3-phosphate site. Glycerol is bound by residues Arg84, Glu85, Tyr136, Asp246, and Gln247. Positions 268 and 311 each coordinate ADP. Thr268, Gly311, Gln315, and Gly412 together coordinate ATP. Residues Gly412 and Asn416 each coordinate ADP.

This sequence belongs to the FGGY kinase family. In terms of assembly, homotetramer and homodimer (in equilibrium). Heterodimer with EIIA-Glc. Binds 1 zinc ion per glycerol kinase EIIA-Glc dimer. The zinc ion is important for dimerization.

It carries out the reaction glycerol + ATP = sn-glycerol 3-phosphate + ADP + H(+). The protein operates within polyol metabolism; glycerol degradation via glycerol kinase pathway; sn-glycerol 3-phosphate from glycerol: step 1/1. With respect to regulation, activity of this regulatory enzyme is affected by several metabolites. Allosterically and non-competitively inhibited by fructose 1,6-bisphosphate (FBP) and unphosphorylated phosphocarrier protein EIIA-Glc (III-Glc), an integral component of the bacterial phosphotransferase (PTS) system. Functionally, key enzyme in the regulation of glycerol uptake and metabolism. Catalyzes the phosphorylation of glycerol to yield sn-glycerol 3-phosphate. The sequence is that of Glycerol kinase from Escherichia coli O127:H6 (strain E2348/69 / EPEC).